A 280-amino-acid polypeptide reads, in one-letter code: Phosphatidylserine decarboxylase proenzyme (280 aa).

Active-site charge relay system; for autoendoproteolytic cleavage activity residues include Asp88, His145, and Ser249. Ser249 (schiff-base intermediate with substrate; via pyruvic acid; for decarboxylase activity) is an active-site residue. Ser249 carries the post-translational modification Pyruvic acid (Ser); by autocatalysis.

Belongs to the phosphatidylserine decarboxylase family. PSD-B subfamily. Prokaryotic type I sub-subfamily. Heterodimer of a large membrane-associated beta subunit and a small pyruvoyl-containing alpha subunit. It depends on pyruvate as a cofactor. In terms of processing, is synthesized initially as an inactive proenzyme. Formation of the active enzyme involves a self-maturation process in which the active site pyruvoyl group is generated from an internal serine residue via an autocatalytic post-translational modification. Two non-identical subunits are generated from the proenzyme in this reaction, and the pyruvate is formed at the N-terminus of the alpha chain, which is derived from the carboxyl end of the proenzyme. The autoendoproteolytic cleavage occurs by a canonical serine protease mechanism, in which the side chain hydroxyl group of the serine supplies its oxygen atom to form the C-terminus of the beta chain, while the remainder of the serine residue undergoes an oxidative deamination to produce ammonia and the pyruvoyl prosthetic group on the alpha chain. During this reaction, the Ser that is part of the protease active site of the proenzyme becomes the pyruvoyl prosthetic group, which constitutes an essential element of the active site of the mature decarboxylase.

The protein localises to the cell membrane. The catalysed reaction is a 1,2-diacyl-sn-glycero-3-phospho-L-serine + H(+) = a 1,2-diacyl-sn-glycero-3-phosphoethanolamine + CO2. It participates in phospholipid metabolism; phosphatidylethanolamine biosynthesis; phosphatidylethanolamine from CDP-diacylglycerol: step 2/2. Its function is as follows. Catalyzes the formation of phosphatidylethanolamine (PtdEtn) from phosphatidylserine (PtdSer). The chain is Phosphatidylserine decarboxylase proenzyme from Chromobacterium violaceum (strain ATCC 12472 / DSM 30191 / JCM 1249 / CCUG 213 / NBRC 12614 / NCIMB 9131 / NCTC 9757 / MK).